The sequence spans 468 residues: Soluble pyridine nucleotide transhydrogenase (468 aa).

38–47 lines the FAD pocket; sequence ERHYNVGGGC.

The protein belongs to the class-I pyridine nucleotide-disulfide oxidoreductase family. FAD serves as cofactor.

It localises to the cytoplasm. The catalysed reaction is NAD(+) + NADPH = NADH + NADP(+). Functionally, conversion of NADPH, generated by peripheral catabolic pathways, to NADH, which can enter the respiratory chain for energy generation. In Pectobacterium atrosepticum (strain SCRI 1043 / ATCC BAA-672) (Erwinia carotovora subsp. atroseptica), this protein is Soluble pyridine nucleotide transhydrogenase.